Here is a 328-residue protein sequence, read N- to C-terminus: MKFYNSTNEIPEEMLKGIDLTYPQLTYLPETGILYDNTYNEKTVPIISGGGSGHEPAHVGYVGSGMLAAAVTGPLFIPPKSKNILKAIRQVNSGKGVFVIIKNFEADLKEFNEAIKEARTEGIDVRYIVSHDDISVNAYNFHKRHRGVAGTILLHKILGAFAKEGGSIDEIEQLALSLSPEIYTLGVALAPVHFPHQKTSFVLAEDEVSFGIGIHGEPGYRVEKFEGSERIAIELVNKLKAEINWQKKANKNYILLVNGLGSTTLMELYSFQYDVMRLLELEGLSVKFCKVGNLMTSCDMSGISLTLCSVKDPKWLDYLNVPTGAFAW.

Positions 6–328 constitute a DhaK domain; the sequence is STNEIPEEML…LNVPTGAFAW (323 aa). A Tele-(1,2,3-trihydroxypropan-2-yl)histidine modification is found at histidine 215.

In terms of assembly, homodimer. Interacts with a homodimer of DhaS.

In terms of biological role, coactivator for the transcription factor DhaS. The heterotetramer formed by DhaQ and DhaS functions as a transcriptional regulator. Activated by covalent binding of dihydroxyacetone to DhaQ. The complex activates the dhaKLM operon. The chain is DhaKLM operon coactivator DhaQ (dhaQ) from Lactococcus lactis subsp. lactis (strain IL1403) (Streptococcus lactis).